The primary structure comprises 404 residues: Coenzyme F(430) synthetase (404 aa).

Position 112 to 117 (112 to 117 (GVKGKT)) interacts with ATP.

It belongs to the MurCDEF family.

The enzyme catalyses 15,17(3)-seco-F430-17(3)-acid + ATP = coenzyme F430 + ADP + phosphate. In terms of biological role, involved in the biosynthesis of the unique nickel-containing tetrapyrrole coenzyme F430, the prosthetic group of methyl-coenzyme M reductase (MCR), which plays a key role in methanogenesis and anaerobic methane oxidation. Catalyzes the activation the g-propionate side chain of 15,17(3)-seco-F430-17(3)-acid (seco-F430) for intramolecular C-C bond formation to yield the carbocyclic F ring of coenzyme F430. In Methanocaldococcus jannaschii (strain ATCC 43067 / DSM 2661 / JAL-1 / JCM 10045 / NBRC 100440) (Methanococcus jannaschii), this protein is Coenzyme F(430) synthetase.